The primary structure comprises 340 residues: L-galactonate-5-dehydrogenase (340 aa).

Zn(2+) is bound by residues Cys40, Cys65, Cys92, Cys95, Cys98, Cys106, and Glu146.

The protein belongs to the zinc-containing alcohol dehydrogenase family. The cofactor is Zn(2+).

It carries out the reaction L-galactonate + NAD(+) = keto-D-tagaturonate + NADH + H(+). Inhibited by EDTA. Functionally, catalyzes the oxidation of L-galactonate to D-tagaturonate. Required for growth on L-galactonate as the sole carbon source. In vitro, can also use L-gulonate. This Escherichia coli (strain K12) protein is L-galactonate-5-dehydrogenase (lgoD).